A 279-amino-acid chain; its full sequence is Putative pyruvate, phosphate dikinase regulatory protein (279 aa).

Position 154 to 161 (154 to 161 (GVSRTSKT)) interacts with ADP.

It belongs to the pyruvate, phosphate/water dikinase regulatory protein family. PDRP subfamily.

The catalysed reaction is N(tele)-phospho-L-histidyl/L-threonyl-[pyruvate, phosphate dikinase] + ADP = N(tele)-phospho-L-histidyl/O-phospho-L-threonyl-[pyruvate, phosphate dikinase] + AMP + H(+). The enzyme catalyses N(tele)-phospho-L-histidyl/O-phospho-L-threonyl-[pyruvate, phosphate dikinase] + phosphate + H(+) = N(tele)-phospho-L-histidyl/L-threonyl-[pyruvate, phosphate dikinase] + diphosphate. Its function is as follows. Bifunctional serine/threonine kinase and phosphorylase involved in the regulation of the pyruvate, phosphate dikinase (PPDK) by catalyzing its phosphorylation/dephosphorylation. The protein is Putative pyruvate, phosphate dikinase regulatory protein of Rhodopseudomonas palustris (strain BisB18).